Here is a 563-residue protein sequence, read N- to C-terminus: Tripeptidyl-peptidase 1 (563 aa).

The first 19 residues, 1 to 19 (MGLQACLLGLFALILSGKC), serve as a signal peptide directing secretion. Positions 20-195 (SYSPEPDQRR…PEPQVTGTVG (176 aa)) are cleaved as a propeptide — removed in mature form. Cys-111 and Cys-122 are joined by a disulfide. Positions 199–563 (GVTPSVIRKR…PALLKTLLNP (365 aa)) constitute a Peptidase S53 domain. Residues Asn-210 and Asn-222 are each glycosylated (N-linked (GlcNAc...) asparagine). Catalysis depends on charge relay system residues Glu-272 and Asp-276. 3 N-linked (GlcNAc...) asparagine glycosylation sites follow: Asn-286, Asn-313, and Asn-443. Cystine bridges form between Cys-365–Cys-526 and Cys-522–Cys-537. Ser-475 (charge relay system) is an active-site residue. Residues Asp-517 and Val-518 each contribute to the Ca(2+) site. Ca(2+)-binding residues include Gly-539, Gly-541, and Asp-543.

Monomer. Interacts with CLN5. Interacts with CLN3. Ca(2+) serves as cofactor. Post-translationally, activated by autocatalytic proteolytical processing upon acidification. N-glycosylation is required for processing and activity.

The protein resides in the lysosome. The protein localises to the melanosome. It carries out the reaction Release of an N-terminal tripeptide from a polypeptide, but also has endopeptidase activity.. Functionally, lysosomal serine protease with tripeptidyl-peptidase I activity. May act as a non-specific lysosomal peptidase which generates tripeptides from the breakdown products produced by lysosomal proteinases. Requires substrates with an unsubstituted N-terminus. The polypeptide is Tripeptidyl-peptidase 1 (TPP1) (Pan troglodytes (Chimpanzee)).